The following is a 1997-amino-acid chain: Otoferlin (1997 aa).

In terms of domain architecture, C2 1 spans 1–98 (MALLIHLKTV…VEESHVEVTD (98 aa)). The Cytoplasmic segment spans residues 1–1963 (MALLIHLKTV…ARYFLWHTYR (1963 aa)). Residues 128-171 (WDDGDFLGDESLQEEEKDSQETDGLLPGSRPSSRPPGEKSFRRA) are disordered. Positions 129–145 (DDGDFLGDESLQEEEKD) are enriched in acidic residues. C2 domains are found at residues 236–357 (KRSK…HKWA) and 400–531 (IEGN…FLPT). The segment at 642-694 (NEVDGLSRPQRPRPRKEPGDEEEVDLIQNASDDEAGDAGDLASVSSTPPMRPQ) is disordered. The segment covering 660–678 (GDEEEVDLIQNASDDEAGD) has biased composition (acidic residues). Residues 792–821 (RERLKSCMRELENMGQQARMLRAQVKRHTV) are a coiled coil. C2 domains lie at 944–1069 (LHAF…PPRF) and 1115–1242 (DRGP…PSWN). 5 residues coordinate Ca(2+): aspartate 976, aspartate 982, aspartate 1038, aspartate 1040, and aspartate 1046. 2 disordered regions span residues 1299-1324 (AEEE…PDES) and 1343-1405 (LRQQ…KPKI). 2 stretches are compositionally biased toward acidic residues: residues 1314 to 1324 (EEPEEEEPDES) and 1352 to 1361 (DLEEKEEVDN). Residues 1370–1383 (KGKEKARAAKEEKK) show a composition bias toward basic and acidic residues. A compositionally biased stretch (low complexity) spans 1387-1396 (QSSGSGQGSE). 2 consecutive C2 domains span residues 1464–1593 (LPED…ATCG) and 1714–1865 (DMPA…KQCT). Ca(2+)-binding residues include aspartate 1508, aspartate 1514, aspartate 1563, aspartate 1565, aspartate 1571, aspartate 1836, serine 1839, and aspartate 1842. A helical membrane pass occupies residues 1964–1984 (WLLLKLLLLLLLLLLLALFLY). The Extracellular segment spans residues 1985 to 1997 (SVPGYLVKKILGA).

This sequence belongs to the ferlin family. Interacts with SNAP2; the interaction is direct. Interacts with STX1; the interaction is direct. Interacts with RAB8B. Requires Ca(2+) as cofactor. In terms of tissue distribution, isoform 1 and isoform 3 are found in adult brain. Isoform 2 is expressed in the fetus and in adult brain, heart, placenta, skeletal muscle and kidney.

The protein localises to the cytoplasmic vesicle. It is found in the secretory vesicle. Its subcellular location is the synaptic vesicle membrane. The protein resides in the basolateral cell membrane. It localises to the endoplasmic reticulum membrane. The protein localises to the golgi apparatus membrane. It is found in the presynaptic cell membrane. Its subcellular location is the cell membrane. In terms of biological role, key calcium ion sensor involved in the Ca(2+)-triggered synaptic vesicle-plasma membrane fusion and in the control of neurotransmitter release at these output synapses. Interacts in a calcium-dependent manner to the presynaptic SNARE proteins at ribbon synapses of cochlear inner hair cells (IHCs) to trigger exocytosis of neurotransmitter. Also essential to synaptic exocytosis in immature outer hair cells (OHCs). May also play a role within the recycling of endosomes. In Homo sapiens (Human), this protein is Otoferlin (OTOF).